The sequence spans 601 residues: DNA ligase (601 aa).

Residue Asp-258 participates in ATP binding. The N6-AMP-lysine intermediate role is filled by Lys-260. 6 residues coordinate ATP: Arg-265, Arg-280, Glu-310, Phe-350, Arg-427, and Lys-433. Positions 568–601 (DKSPEDATTTDEILEMYNKQPKKKIESPPIDESV) are disordered.

The protein belongs to the ATP-dependent DNA ligase family. It depends on Mg(2+) as a cofactor.

It catalyses the reaction ATP + (deoxyribonucleotide)n-3'-hydroxyl + 5'-phospho-(deoxyribonucleotide)m = (deoxyribonucleotide)n+m + AMP + diphosphate.. Functionally, DNA ligase that seals nicks in double-stranded DNA during DNA replication, DNA recombination and DNA repair. This is DNA ligase from Saccharolobus islandicus (strain Y.G.57.14 / Yellowstone #1) (Sulfolobus islandicus).